Here is a 202-residue protein sequence, read N- to C-terminus: LexA repressor (202 aa).

A DNA-binding region (H-T-H motif) is located at residues 28 to 48 (RAEIAQRLGFRSPNAAEEHLK). Catalysis depends on for autocatalytic cleavage activity residues serine 119 and lysine 156.

This sequence belongs to the peptidase S24 family. In terms of assembly, homodimer.

The enzyme catalyses Hydrolysis of Ala-|-Gly bond in repressor LexA.. Represses a number of genes involved in the response to DNA damage (SOS response), including recA and lexA. Binds to the 16 bp palindromic sequence 5'-CTGTATATATATACAG-3'. In the presence of single-stranded DNA, RecA interacts with LexA causing an autocatalytic cleavage which disrupts the DNA-binding part of LexA, leading to derepression of the SOS regulon and eventually DNA repair. This chain is LexA repressor, found in Klebsiella pneumoniae (strain 342).